The primary structure comprises 1027 residues: uncharacterized protein (1027 aa).

This is an uncharacterized protein from Colorado tick fever virus (strain USA/Florio N-7180) (CTFV).